A 208-amino-acid polypeptide reads, in one-letter code: MDDVTKALNLVPMVVEQTSRGERAYDIYSRLLKERLIFLVGPIDDYMANLIVAQLLFLEAENPEKDINIYINSPGGVVTAGMAIYDTMQYIKPAVSTICVGQAASMGALLLASGASGKRYALPNSRVMIHQPLGGFQGQATDIDIHAREILALRARLNEILAKHTGQSLETIAHDTERDNFKSAVDAQAYGLVDQVFGQRQEELIQSS.

Serine 105 acts as the Nucleophile in catalysis. Histidine 130 is a catalytic residue.

It belongs to the peptidase S14 family. In terms of assembly, fourteen ClpP subunits assemble into 2 heptameric rings which stack back to back to give a disk-like structure with a central cavity, resembling the structure of eukaryotic proteasomes.

The protein resides in the cytoplasm. It carries out the reaction Hydrolysis of proteins to small peptides in the presence of ATP and magnesium. alpha-casein is the usual test substrate. In the absence of ATP, only oligopeptides shorter than five residues are hydrolyzed (such as succinyl-Leu-Tyr-|-NHMec, and Leu-Tyr-Leu-|-Tyr-Trp, in which cleavage of the -Tyr-|-Leu- and -Tyr-|-Trp bonds also occurs).. In terms of biological role, cleaves peptides in various proteins in a process that requires ATP hydrolysis. Has a chymotrypsin-like activity. Plays a major role in the degradation of misfolded proteins. The chain is ATP-dependent Clp protease proteolytic subunit from Xylella fastidiosa (strain M23).